The sequence spans 245 residues: S-methyl-5'-thioinosine phosphorylase (245 aa).

Residues Thr10 and 52–53 (RH) each bind phosphate. Residue Met185 coordinates substrate. Thr186 provides a ligand contact to phosphate. 209–211 (NPA) is a substrate binding site.

It belongs to the PNP/MTAP phosphorylase family. MTAP subfamily. Homotrimer.

The enzyme catalyses S-methyl-5'-thioinosine + phosphate = 5-(methylsulfanyl)-alpha-D-ribose 1-phosphate + hypoxanthine. It functions in the pathway purine metabolism; purine nucleoside salvage. Functionally, catalyzes the reversible phosphorylation of S-methyl-5'-thioinosine (MTI) to hypoxanthine and 5-methylthioribose-1-phosphate. Involved in the breakdown of S-methyl-5'-thioadenosine (MTA), a major by-product of polyamine biosynthesis. Catabolism of (MTA) occurs via deamination to MTI and phosphorolysis to hypoxanthine. Involved in quorum sensing. The sequence is that of S-methyl-5'-thioinosine phosphorylase from Pseudomonas aeruginosa (strain ATCC 15692 / DSM 22644 / CIP 104116 / JCM 14847 / LMG 12228 / 1C / PRS 101 / PAO1).